A 144-amino-acid chain; its full sequence is Cytochrome c oxidase subunit 4 isoform 1, mitochondrial (144 aa).

Residues 1–73 (SVVKSEDFSL…SFAEMNRGSN (73 aa)) are Mitochondrial matrix-facing. Position 4 is an N6-acetyllysine; alternate (Lys4). At Lys4 the chain carries N6-succinyllysine; alternate. Lys28 bears the N6-acetyllysine mark. Phosphoserine is present on residues Ser31 and Ser33. Lys35 carries the N6-acetyllysine; alternate modification. Lys35 is subject to N6-succinyllysine; alternate. The residue at position 42 (Lys42) is an N6-acetyllysine. A helical transmembrane segment spans residues 74–99 (EWKTVVGGAMFFIGFTALIIMWQKHY). Residues 100 to 144 (VYGPLPQTFDKEWVGKQTKRMLDMKVNPIQGLASKWDYEKNEWKK) are Mitochondrial intermembrane-facing.

Belongs to the cytochrome c oxidase IV family. In terms of assembly, component of the cytochrome c oxidase (complex IV, CIV), a multisubunit enzyme composed of 14 subunits. The complex is composed of a catalytic core of 3 subunits MT-CO1, MT-CO2 and MT-CO3, encoded in the mitochondrial DNA, and 11 supernumerary subunits COX4I, COX5A, COX5B, COX6A, COX6B, COX6C, COX7A, COX7B, COX7C, COX8 and NDUFA4, which are encoded in the nuclear genome. The complex exists as a monomer or a dimer and forms supercomplexes (SCs) in the inner mitochondrial membrane with NADH-ubiquinone oxidoreductase (complex I, CI) and ubiquinol-cytochrome c oxidoreductase (cytochrome b-c1 complex, complex III, CIII), resulting in different assemblies (supercomplex SCI(1)III(2)IV(1) and megacomplex MCI(2)III(2)IV(2)). Interacts with PHB2; the interaction decreases in absence of SPHK2. Interacts with AFG1L. Interacts with ABCB7; this interaction allows the regulation of cellular iron homeostasis and cellular reactive oxygen species (ROS) levels in cardiomyocytes. Interacts with FLVCR2; this interaction occurs in the absence of heme and is disrupted upon heme binding. Interacts with IRGC.

Its subcellular location is the mitochondrion inner membrane. The protein operates within energy metabolism; oxidative phosphorylation. Its function is as follows. Component of the cytochrome c oxidase, the last enzyme in the mitochondrial electron transport chain which drives oxidative phosphorylation. The respiratory chain contains 3 multisubunit complexes succinate dehydrogenase (complex II, CII), ubiquinol-cytochrome c oxidoreductase (cytochrome b-c1 complex, complex III, CIII) and cytochrome c oxidase (complex IV, CIV), that cooperate to transfer electrons derived from NADH and succinate to molecular oxygen, creating an electrochemical gradient over the inner membrane that drives transmembrane transport and the ATP synthase. Cytochrome c oxidase is the component of the respiratory chain that catalyzes the reduction of oxygen to water. Electrons originating from reduced cytochrome c in the intermembrane space (IMS) are transferred via the dinuclear copper A center (CU(A)) of subunit 2 and heme A of subunit 1 to the active site in subunit 1, a binuclear center (BNC) formed by heme A3 and copper B (CU(B)). The BNC reduces molecular oxygen to 2 water molecules using 4 electrons from cytochrome c in the IMS and 4 protons from the mitochondrial matrix. The sequence is that of Cytochrome c oxidase subunit 4 isoform 1, mitochondrial (COX4I1) from Hylobates agilis (Agile gibbon).